A 188-amino-acid polypeptide reads, in one-letter code: MSQDDLEIDLDAIQRRMDGAMHALRTEFGSLRTGRASASILEPIHVDAYGQQTPLNQLGTINVPEPRMVVINVWDKGMISKVERAIRDSGIGINPVVDGPIIRLPIPELNEERRKELSKVAAHYAEQARVAIRNVRRDGMDQIKKAKSVGMAEDDQKMWSDEVQALTDKAIAAVDKALEEKQKEIMQV.

This sequence belongs to the RRF family.

It is found in the cytoplasm. Its function is as follows. Responsible for the release of ribosomes from messenger RNA at the termination of protein biosynthesis. May increase the efficiency of translation by recycling ribosomes from one round of translation to another. The polypeptide is Ribosome-recycling factor (Cereibacter sphaeroides (strain ATCC 17023 / DSM 158 / JCM 6121 / CCUG 31486 / LMG 2827 / NBRC 12203 / NCIMB 8253 / ATH 2.4.1.) (Rhodobacter sphaeroides)).